A 419-amino-acid chain; its full sequence is Adenylosuccinate synthetase (419 aa).

GTP is bound by residues 15 to 21 (GDEGKGK) and 43 to 45 (GHT). The active-site Proton acceptor is Asp-16. Residues Asp-16 and Gly-43 each contribute to the Mg(2+) site. IMP-binding positions include 16–19 (DEGK), 41–44 (NAGH), Thr-128, Arg-142, Gln-223, Thr-238, and Arg-302. His-44 (proton donor) is an active-site residue. 298–304 (TTTGRAR) contacts substrate. GTP contacts are provided by residues Arg-304, 330–332 (KLD), and 408–410 (STS).

Belongs to the adenylosuccinate synthetase family. In terms of assembly, homodimer. It depends on Mg(2+) as a cofactor.

The protein resides in the cytoplasm. The enzyme catalyses IMP + L-aspartate + GTP = N(6)-(1,2-dicarboxyethyl)-AMP + GDP + phosphate + 2 H(+). It functions in the pathway purine metabolism; AMP biosynthesis via de novo pathway; AMP from IMP: step 1/2. Plays an important role in the de novo pathway of purine nucleotide biosynthesis. Catalyzes the first committed step in the biosynthesis of AMP from IMP. The chain is Adenylosuccinate synthetase from Sulfurimonas denitrificans (strain ATCC 33889 / DSM 1251) (Thiomicrospira denitrificans (strain ATCC 33889 / DSM 1251)).